The following is a 166-amino-acid chain: Small ribosomal subunit protein uS5 (166 aa).

The S5 DRBM domain occupies 11-74 (LQEKLIAVNR…EKARRNMMNV (64 aa)).

It belongs to the universal ribosomal protein uS5 family. In terms of assembly, part of the 30S ribosomal subunit. Contacts proteins S4 and S8.

In terms of biological role, with S4 and S12 plays an important role in translational accuracy. Located at the back of the 30S subunit body where it stabilizes the conformation of the head with respect to the body. The polypeptide is Small ribosomal subunit protein uS5 (Pectobacterium atrosepticum (strain SCRI 1043 / ATCC BAA-672) (Erwinia carotovora subsp. atroseptica)).